A 135-amino-acid polypeptide reads, in one-letter code: uncharacterized protein (135 aa).

This is an uncharacterized protein from Sinorhizobium fredii (strain NBRC 101917 / NGR234).